We begin with the raw amino-acid sequence, 315 residues long: MQCNDVQATEPDIKVSLTRVGVTNLKKLVKLKRTNKRDIVLLPTFEVFVDLPSSQKGIHMSRSPEVIEEVVENILLEKEIYGVEDLSVEIVMKLFEKHEYATRAEVMLYSDYMMEETSPVTQKDSQEIAKIMARAYGVKDDCGKIHVKKMVGAEVVGITACPCAQNMLKENAVTSLKEKGFSSEDIEKILDSVTIATHNQRGIGTVMIEVPSGYTVGISKIIKIIKDSMSGEVYELLKRSDEAYVVEMAHKNPKFVEDCAREMIKRVVDVFDYLPEDTQVLVRQVNKESIHRHDAFAERNSTIRELRDELKTLTN.

Belongs to the GTP cyclohydrolase IV family. In terms of assembly, homodimer. Fe(2+) serves as cofactor.

It catalyses the reaction GTP + H2O = 7,8-dihydroneopterin 2',3'-cyclic phosphate + formate + diphosphate + H(+). It participates in cofactor biosynthesis; 5,6,7,8-tetrahydromethanopterin biosynthesis. Its function is as follows. Converts GTP to 7,8-dihydro-D-neopterin 2',3'-cyclic phosphate, the first intermediate in the biosynthesis of coenzyme methanopterin. This Methanococcus maripaludis (strain C7 / ATCC BAA-1331) protein is GTP cyclohydrolase MptA.